The primary structure comprises 891 residues: DNA mismatch repair protein MutS (891 aa).

Gly617 to Ser624 provides a ligand contact to ATP. A compositionally biased stretch (basic and acidic residues) spans Arg805–Lys827. The interval Arg805–Arg840 is disordered.

It belongs to the DNA mismatch repair MutS family.

Functionally, this protein is involved in the repair of mismatches in DNA. It is possible that it carries out the mismatch recognition step. This protein has a weak ATPase activity. In Porphyromonas gingivalis (strain ATCC BAA-308 / W83), this protein is DNA mismatch repair protein MutS.